Consider the following 112-residue polypeptide: Protein Churchill (112 aa).

The Zn(2+) site is built by cysteine 2, cysteine 5, cysteine 30, cysteine 33, histidine 59, cysteine 61, cysteine 64, histidine 66, histidine 71, cysteine 88, and cysteine 91.

The protein belongs to the Churchill family.

In terms of biological role, transcriptional activator that mediates FGF signaling during neural development. Plays a role in the regulation of cell movement. Does not bind DNA by itself. In Homo sapiens (Human), this protein is Protein Churchill (CHURC1).